We begin with the raw amino-acid sequence, 634 residues long: Factor of DNA methylation 5 (634 aa).

A coiled-coil region spans residues 254-469; sequence IVVDDLANKI…EDTNSALMVK (216 aa).

Functionally, acts in association with FDM3 and FDM4 for RNA-directed DNA methylation (RdDM). This is Factor of DNA methylation 5 from Arabidopsis thaliana (Mouse-ear cress).